Here is a 399-residue protein sequence, read N- to C-terminus: MSQYRTFAAADAVEYARQFGGVDNPNSLVDALEVGDGNLNLVFRIFDTAGVSRVIVKQALPWVRCVGESWPLTLDRARLEAEVLIEHGKFCPQHTVNILHYDPLLAVTVMEDLSDHAIWRADLVKGIDWPQAAGQLGDYLAQTLFHTSDFFQHPHQKKADVIRFTNPELCDITEELFFNEPYEVHARNAYPRALEPLAESLREDHELRVAVAGLKHRFYSNAEALLHGDVHSGSIFVAEGSLKVIDAEFGFYGPIGFDIGSALGNLLISYCAAPGLLPPREAADAREKRLNDVRQLWQSFAEGFLALAAEKSRDRALAVPGYASTFLAKIWRDSVGYSGTELIRRTVGMSQVADIKGIQDDAMRVECVRQAITLGRSLILLADHVADIDALIARIRQNG.

ATP-binding positions include Asn-40, Lys-57, and 111–113 (EDL). Asp-229 lines the substrate pocket. Residue 246-248 (DAE) participates in ATP binding. Position 344 (Arg-344) interacts with substrate.

This sequence belongs to the methylthioribose kinase family. As to quaternary structure, homodimer.

The enzyme catalyses 5-(methylsulfanyl)-D-ribose + ATP = 5-(methylsulfanyl)-alpha-D-ribose 1-phosphate + ADP + H(+). It functions in the pathway amino-acid biosynthesis; L-methionine biosynthesis via salvage pathway; S-methyl-5-thio-alpha-D-ribose 1-phosphate from S-methyl-5'-thioadenosine (hydrolase route): step 2/2. Functionally, catalyzes the phosphorylation of methylthioribose into methylthioribose-1-phosphate. This chain is Methylthioribose kinase, found in Erwinia tasmaniensis (strain DSM 17950 / CFBP 7177 / CIP 109463 / NCPPB 4357 / Et1/99).